Consider the following 935-residue polypeptide: Dual 3',5'-cyclic-AMP and -GMP phosphodiesterase 11A (935 aa).

Residues 41-125 (RHSSGQGASD…ASQKELRKSF (85 aa)) form a disordered region. Residues 54-69 (ALAGASSLAQSSARGS) are compositionally biased toward low complexity. Residues serine 162, serine 163, and serine 239 each carry the phosphoserine modification. 2 consecutive GAF domains span residues 217-370 (DLTS…GIAI) and 402-558 (DLEK…GLGI). Serine 424 is a binding site for 3',5'-cyclic GMP. Positions 588–912 (SKAEVDKFKA…RKWEELHQKR (325 aa)) constitute a PDEase domain. The active-site Proton donor is the histidine 664. A divalent metal cation contacts are provided by histidine 668, histidine 704, aspartate 705, and aspartate 816. Residues 915-935 (VSAASPVPSSPSPAVAGEDRL) are disordered.

This sequence belongs to the cyclic nucleotide phosphodiesterase family. Requires a divalent metal cation as cofactor. In terms of tissue distribution, isoform 1 is expressed in brain, heart, kidney and liver, but not in prostate. Isoform 2 is specifically expressed in testis. Isoform 3 is expressed in various tissues including brain, lung, skeletal muscle, spleen, testis and prostate.

It is found in the cytoplasm. It localises to the cytosol. It catalyses the reaction 3',5'-cyclic GMP + H2O = GMP + H(+). The enzyme catalyses 3',5'-cyclic AMP + H2O = AMP + H(+). Inhibited by 3-isobutyl-1-methylxanthine (IBMX), zaprinast and dipyridamole. cGMP acts as an allosteric activator. Its function is as follows. Plays a role in signal transduction by regulating the intracellular concentration of cyclic nucleotides cAMP and cGMP. Catalyzes the hydrolysis of both cAMP and cGMP to 5'-AMP and 5'-GMP, respectively. The sequence is that of Dual 3',5'-cyclic-AMP and -GMP phosphodiesterase 11A from Rattus norvegicus (Rat).